A 320-amino-acid chain; its full sequence is ADP-L-glycero-D-manno-heptose-6-epimerase (320 aa).

NADP(+) contacts are provided by residues 10–11 (FI), 31–32 (DN), K38, K53, 75–79 (LGACS), and N92. The active-site Proton acceptor is Y139. Position 143 (K143) interacts with NADP(+). N168 is a binding site for substrate. Residues V169 and K177 each contribute to the NADP(+) site. Catalysis depends on K177, which acts as the Proton acceptor. Residues G179, H186, 200–203 (FEGS), R213, and Y277 each bind substrate.

It belongs to the NAD(P)-dependent epimerase/dehydratase family. HldD subfamily. In terms of assembly, homopentamer. The cofactor is NADP(+).

The catalysed reaction is ADP-D-glycero-beta-D-manno-heptose = ADP-L-glycero-beta-D-manno-heptose. It functions in the pathway nucleotide-sugar biosynthesis; ADP-L-glycero-beta-D-manno-heptose biosynthesis; ADP-L-glycero-beta-D-manno-heptose from D-glycero-beta-D-manno-heptose 7-phosphate: step 4/4. Its function is as follows. Catalyzes the interconversion between ADP-D-glycero-beta-D-manno-heptose and ADP-L-glycero-beta-D-manno-heptose via an epimerization at carbon 6 of the heptose. This is ADP-L-glycero-D-manno-heptose-6-epimerase from Alkalilimnicola ehrlichii (strain ATCC BAA-1101 / DSM 17681 / MLHE-1).